Consider the following 472-residue polypeptide: Adenosylhomocysteinase (472 aa).

Substrate is bound by residues Thr60, Asp136, and Glu197. 198–200 (TTT) provides a ligand contact to NAD(+). The substrate site is built by Lys227 and Asp231. Residues Asn232, 261 to 266 (GYGDVG), Glu284, Asn319, 340 to 342 (IGH), and Asn388 contribute to the NAD(+) site.

The protein belongs to the adenosylhomocysteinase family. NAD(+) serves as cofactor.

It localises to the cytoplasm. It carries out the reaction S-adenosyl-L-homocysteine + H2O = L-homocysteine + adenosine. Its pathway is amino-acid biosynthesis; L-homocysteine biosynthesis; L-homocysteine from S-adenosyl-L-homocysteine: step 1/1. Functionally, may play a key role in the regulation of the intracellular concentration of adenosylhomocysteine. In Maridesulfovibrio salexigens (strain ATCC 14822 / DSM 2638 / NCIMB 8403 / VKM B-1763) (Desulfovibrio salexigens), this protein is Adenosylhomocysteinase.